We begin with the raw amino-acid sequence, 511 residues long: Xylose import ATP-binding protein XylG (511 aa).

ABC transporter domains are found at residues 6-244 (LEMR…VGRE) and 261-506 (FEAR…IGKP). 38 to 45 (GENGAGKS) is an ATP binding site.

The protein belongs to the ABC transporter superfamily. Xylose importer (TC 3.A.1.2.4) family. The complex is composed of two ATP-binding proteins (XylG), two transmembrane proteins (XylH) and a solute-binding protein (XylF).

The protein localises to the cell inner membrane. The catalysed reaction is D-xylose(out) + ATP + H2O = D-xylose(in) + ADP + phosphate + H(+). In terms of biological role, part of the ABC transporter complex XylFGH involved in xylose import. Responsible for energy coupling to the transport system. The chain is Xylose import ATP-binding protein XylG from Brucella abortus (strain 2308).